Reading from the N-terminus, the 245-residue chain is 23S rRNA (guanosine-2'-O-)-methyltransferase RlmB (245 aa).

Residues Gly197, Ile217, and Leu226 each contribute to the S-adenosyl-L-methionine site.

This sequence belongs to the class IV-like SAM-binding methyltransferase superfamily. RNA methyltransferase TrmH family. RlmB subfamily.

It is found in the cytoplasm. It carries out the reaction guanosine(2251) in 23S rRNA + S-adenosyl-L-methionine = 2'-O-methylguanosine(2251) in 23S rRNA + S-adenosyl-L-homocysteine + H(+). In terms of biological role, specifically methylates the ribose of guanosine 2251 in 23S rRNA. In Pasteurella multocida (strain Pm70), this protein is 23S rRNA (guanosine-2'-O-)-methyltransferase RlmB.